The chain runs to 107 residues: 4-carboxymethyl-4-methylbutenolide mutase (107 aa).

Residue His26 is the Proton donor/acceptor of the active site. 3-methylmuconolactone contacts are provided by His26 and Tyr39. 4-methylmuconolactone contacts are provided by His26 and Tyr39.

Belongs to the MmlI family. Homodimer.

The enzyme catalyses 4-methylmuconolactone = 3-methylmuconolactone. Inhibited by p-chloromercuribenzoate. In terms of biological role, isomerase involved in the degradation of 4-methylsalicylate and 5-methylsalicylate. Catalyzes the isomerization of the dead-end metabolite 4-methylmuconolactone (4-ML) to 3-methylmuconolactone (3-ML), which can then be further degraded through a modified 3-oxoadipate pathway. Can also use 1-methylbislactone but not 3-methyl-cis,cis-muconate. This is 4-carboxymethyl-4-methylbutenolide mutase from Pseudomonas reinekei.